Here is a 284-residue protein sequence, read N- to C-terminus: Isopentenyl-diphosphate delta-isomerase (284 aa).

Residue Lys-77 coordinates substrate. Mg(2+) contacts are provided by His-81 and His-92. The 167-residue stretch at 90-256 (LLHRAFSVFL…SLVFTPWFKL (167 aa)) folds into the Nudix hydrolase domain. Residues Arg-111 and Lys-115 each coordinate substrate. Cys-127 is an active-site residue. Ser-128 contributes to the substrate binding site. The short motif at 128 to 172 (SHPLCVPSELGVDSSLEGSKDVNNLTNAVKGAKVAAQRKLEHELG) is the Nudix box element. Residues Glu-204 and Glu-206 each coordinate Mg(2+). The active site involves Glu-206.

It belongs to the IPP isomerase type 1 family. Mg(2+) is required as a cofactor.

It localises to the cytoplasm. The catalysed reaction is isopentenyl diphosphate = dimethylallyl diphosphate. It functions in the pathway isoprenoid biosynthesis; dimethylallyl diphosphate biosynthesis; dimethylallyl diphosphate from isopentenyl diphosphate: step 1/1. Functionally, isopentenyl-diphosphate delta-isomerase; part of the second module of ergosterol biosynthesis pathway that includes the middle steps of the pathway. IDI1 catalyzes the 1,3-allylic rearrangement of isopentenyl (IPP) to its highly electrophilic allylic isomer, dimethylallyl diphosphate (DMAPP). The second module is carried out in the vacuole and involves the formation of farnesyl diphosphate, which is also an important intermediate in the biosynthesis of ubiquinone, dolichol, heme and prenylated proteins. Activity by the mevalonate kinase ERG12 first converts mevalonate into 5-phosphomevalonate. 5-phosphomevalonate is then further converted to 5-diphosphomevalonate by the phosphomevalonate kinase ERG8. The diphosphomevalonate decarboxylase MVD then produces isopentenyl diphosphate. The isopentenyl-diphosphate delta-isomerase IDI1 then catalyzes the 1,3-allylic rearrangement of the homoallylic substrate isopentenyl (IPP) to its highly electrophilic allylic isomer, dimethylallyl diphosphate (DMAPP). Finally the farnesyl diphosphate synthase ERG20 catalyzes the sequential condensation of isopentenyl pyrophosphate with dimethylallyl pyrophosphate, and then with the resultant geranylpyrophosphate to the ultimate product farnesyl pyrophosphate. This is Isopentenyl-diphosphate delta-isomerase from Candida albicans (strain SC5314 / ATCC MYA-2876) (Yeast).